The chain runs to 92 residues: Putative septation protein SpoVG (92 aa).

It belongs to the SpoVG family.

Functionally, could be involved in septation. This Clostridium botulinum (strain Eklund 17B / Type B) protein is Putative septation protein SpoVG.